The sequence spans 242 residues: Probable transcriptional regulatory protein HEAR0561 (242 aa).

The protein belongs to the TACO1 family.

The protein resides in the cytoplasm. The protein is Probable transcriptional regulatory protein HEAR0561 of Herminiimonas arsenicoxydans.